The following is a 1273-amino-acid chain: DNA gyrase subunit A (1273 aa).

Positions 42–931 constitute a Topo IIA-type catalytic domain; that stretch reads LPEVRDGLKP…VDGDVNDEDL (890 aa). Tyr-130 (O-(5'-phospho-DNA)-tyrosine intermediate) is an active-site residue. A DOD-type homing endonuclease domain is found at 256–396; that stretch reads LFGAFISGGF…VQQMLLEFGV (141 aa). The GyrA-box signature appears at 958–964; sequence QKRGGKG.

The protein belongs to the type II topoisomerase GyrA/ParC subunit family. As to quaternary structure, heterotetramer, composed of two GyrA and two GyrB chains. In the heterotetramer, GyrA contains the active site tyrosine that forms a transient covalent intermediate with the DNA, while GyrB binds cofactors catalyzes ATP hydrolysis. Post-translationally, this protein undergoes a protein self splicing that involves a post-translational excision of the intervening region (intein) followed by peptide ligation.

The protein resides in the cytoplasm. It catalyses the reaction ATP-dependent breakage, passage and rejoining of double-stranded DNA.. Its activity is regulated as follows. DNA supercoiling is inhibited by fluoroquinolones; IC(50) 1 ug/ml for sitafloxacin. Its function is as follows. A type II topoisomerase that negatively supercoils closed circular double-stranded (ds) DNA in an ATP-dependent manner to modulate DNA topology and maintain chromosomes in an underwound state. Negative supercoiling favors strand separation, and DNA replication, transcription, recombination and repair, all of which involve strand separation. Also able to catalyze the interconversion of other topological isomers of dsDNA rings, including catenanes and knotted rings. Type II topoisomerases break and join 2 DNA strands simultaneously in an ATP-dependent manner. This is DNA gyrase subunit A from Mycobacterium leprae (strain TN).